The primary structure comprises 71 residues: Large ribosomal subunit protein bL31 (71 aa).

Zn(2+) is bound by residues Cys16, Cys18, Cys37, and Cys40.

It belongs to the bacterial ribosomal protein bL31 family. Type A subfamily. In terms of assembly, part of the 50S ribosomal subunit. The cofactor is Zn(2+).

In terms of biological role, binds the 23S rRNA. This is Large ribosomal subunit protein bL31 from Serratia proteamaculans (strain 568).